Reading from the N-terminus, the 386-residue chain is DNA-directed RNA polymerase subunit Rpo1C (386 aa).

Belongs to the RNA polymerase beta' chain family. In terms of assembly, part of the RNA polymerase complex.

It is found in the cytoplasm. It carries out the reaction RNA(n) + a ribonucleoside 5'-triphosphate = RNA(n+1) + diphosphate. In terms of biological role, DNA-dependent RNA polymerase (RNAP) catalyzes the transcription of DNA into RNA using the four ribonucleoside triphosphates as substrates. Forms part of the jaw domain. The polypeptide is DNA-directed RNA polymerase subunit Rpo1C (Methanococcus maripaludis (strain C7 / ATCC BAA-1331)).